The chain runs to 360 residues: Protein phosphatase 1L (360 aa).

At 1–25 the chain is on the extracellular side; the sequence is MIEDTMTLLSLLGRIMRYFLLRPET. The helical transmembrane segment at 26–42 threads the bilayer; that stretch reads LFLLCISLALWSYFFHT. Residues 43 to 360 lie on the Cytoplasmic side of the membrane; sequence DEVKTIVKSS…FRNSSKTEEQ (318 aa). The region spanning 92-351 is the PPM-type phosphatase domain; the sequence is NVAVYSIQGR…DNITVMVVKF (260 aa). Residues D128, G129, D302, and D342 each contribute to the Mn(2+) site.

It belongs to the PP2C family. As to quaternary structure, interacts with MAP3K7/TAK1. Interacts with MAP3K5. Mg(2+) is required as a cofactor. Requires Mn(2+) as cofactor. As to expression, ubiquitous. Highly expressed in heart, placenta, lung, liver, kidney and pancreas.

Its subcellular location is the membrane. The enzyme catalyses O-phospho-L-seryl-[protein] + H2O = L-seryl-[protein] + phosphate. It carries out the reaction O-phospho-L-threonyl-[protein] + H2O = L-threonyl-[protein] + phosphate. In terms of biological role, acts as a suppressor of the SAPK signaling pathways by associating with and dephosphorylating MAP3K7/TAK1 and MAP3K5, and by attenuating the association between MAP3K7/TAK1 and MAP2K4 or MAP2K6. This Homo sapiens (Human) protein is Protein phosphatase 1L (PPM1L).